Here is a 117-residue protein sequence, read N- to C-terminus: Large ribosomal subunit protein bL20 (117 aa).

It belongs to the bacterial ribosomal protein bL20 family.

Binds directly to 23S ribosomal RNA and is necessary for the in vitro assembly process of the 50S ribosomal subunit. It is not involved in the protein synthesizing functions of that subunit. The sequence is that of Large ribosomal subunit protein bL20 from Campylobacter hominis (strain ATCC BAA-381 / DSM 21671 / CCUG 45161 / LMG 19568 / NCTC 13146 / CH001A).